The following is a 457-amino-acid chain: MPKEANMASQDYATQRSSLDAQALINDAPLSRYQWLIAIVCFLIVFVDGIDTAAMGFIAPALAQDWGVDRSQLGPVMSAALGGMIIGALVSGPTADRFGRKIVLSMSMLVFGGFTLACAYSTNLDSLVIFRFLTGIGLGAAMPNATTLFSEYCPARIRSLLVTCMFCGYNLGMAIGGFISSWLIPAFGWHSLFLLGGWAPLILMLLVIFFLPESYRFLIVKGKNTKKVRQILSRIAPQKVQGVTEFHVPEEKVEAGTKKGVFGMLFSAKYVKGTVLLWVTYFMGLVMIYLLTSWLPTLMRETGASLERAAFLGGLFQFGGVLSALFIGWAMDRFNPNRIIAGFYLAAGIFAVIVGQSLSNPTLLALFILCAGIAVNGAQSSMPVLSARFYPTQCRATGVAWMSGIGRFGAVFGAWIGAVLLGNNWSFTMILSMLIIPAAAAAIAIFVKSLVAHTDAT.

Over 1–34 (MPKEANMASQDYATQRSSLDAQALINDAPLSRYQ) the chain is Cytoplasmic. A helical transmembrane segment spans residues 35-55 (WLIAIVCFLIVFVDGIDTAAM). Over 56–72 (GFIAPALAQDWGVDRSQ) the chain is Periplasmic. The chain crosses the membrane as a helical span at residues 73–93 (LGPVMSAALGGMIIGALVSGP). The Cytoplasmic portion of the chain corresponds to 94-101 (TADRFGRK). The helical transmembrane segment at 102–122 (IVLSMSMLVFGGFTLACAYST) threads the bilayer. At 123–128 (NLDSLV) the chain is on the periplasmic side. Residues 129 to 149 (IFRFLTGIGLGAAMPNATTLF) traverse the membrane as a helical segment. Over 150–168 (SEYCPARIRSLLVTCMFCG) the chain is Cytoplasmic. A helical transmembrane segment spans residues 169-189 (YNLGMAIGGFISSWLIPAFGW). Topologically, residues 190–191 (HS) are periplasmic. Residues 192 to 212 (LFLLGGWAPLILMLLVIFFLP) traverse the membrane as a helical segment. Residues 213–274 (ESYRFLIVKG…LFSAKYVKGT (62 aa)) are Cytoplasmic-facing. A helical membrane pass occupies residues 275-295 (VLLWVTYFMGLVMIYLLTSWL). Over 296–310 (PTLMRETGASLERAA) the chain is Periplasmic. Residues 311–331 (FLGGLFQFGGVLSALFIGWAM) traverse the membrane as a helical segment. Residues 332-338 (DRFNPNR) are Cytoplasmic-facing. A helical transmembrane segment spans residues 339 to 359 (IIAGFYLAAGIFAVIVGQSLS). At 360 to 363 (NPTL) the chain is on the periplasmic side. The chain crosses the membrane as a helical span at residues 364 to 384 (LALFILCAGIAVNGAQSSMPV). Residues 385–400 (LSARFYPTQCRATGVA) are Cytoplasmic-facing. Residues 401-421 (WMSGIGRFGAVFGAWIGAVLL) traverse the membrane as a helical segment. Topologically, residues 422–426 (GNNWS) are periplasmic. The chain crosses the membrane as a helical span at residues 427–447 (FTMILSMLIIPAAAAAIAIFV). The Cytoplasmic portion of the chain corresponds to 448–457 (KSLVAHTDAT).

It belongs to the major facilitator superfamily. Aromatic acid:H(+) symporter (AAHS) (TC 2.A.1.15) family. In terms of assembly, homotrimer.

The protein resides in the cell inner membrane. Uptake of 4-hydroxybenzoate (4-HB). Can also transport a variety of aromatic acids with hydroxyl substitutions at the 2-, 3- and 4-positions, such as salicylate, 2,4-dihydroxybenzoate, protocatechuate, 3-hydroxybenzoate, vanillate and gentisate. This is 4-hydroxybenzoate transporter PcaK from Acinetobacter baylyi (strain ATCC 33305 / BD413 / ADP1).